The following is an 804-amino-acid chain: Leucine--tRNA ligase (804 aa).

Residues 39–50 carry the 'HIGH' region motif; it reads PFPSGKGLHVGH. Residues 573 to 577 carry the 'KMSKS' region motif; it reads KMSKS. Lys576 serves as a coordination point for ATP.

This sequence belongs to the class-I aminoacyl-tRNA synthetase family.

Its subcellular location is the cytoplasm. The enzyme catalyses tRNA(Leu) + L-leucine + ATP = L-leucyl-tRNA(Leu) + AMP + diphosphate. This is Leucine--tRNA ligase from Lactobacillus helveticus (strain DPC 4571).